Reading from the N-terminus, the 233-residue chain is Glutathione S-transferase 2 (233 aa).

In terms of domain architecture, GST N-terminal spans 17–101; the sequence is QKMIIYDTPA…YIDALDGTPT (85 aa). Residues Y29, H58, V72, 85-86, and H133 contribute to the glutathione site; that span reads EC. In terms of domain architecture, GST C-terminal spans 106–233; that stretch reads TPLEKGVIHM…KLLEIRSKSS (128 aa).

It belongs to the GST superfamily. Homodimer.

It catalyses the reaction RX + glutathione = an S-substituted glutathione + a halide anion + H(+). This is Glutathione S-transferase 2 (GTT2) from Saccharomyces cerevisiae (strain ATCC 204508 / S288c) (Baker's yeast).